A 108-amino-acid polypeptide reads, in one-letter code: Parvalbumin beta (108 aa).

EF-hand domains are found at residues 38–73 and 77–108; these read KPTDQVKKVFDILDQDKSGYIEEDELQLFLKNFCSS and LSNAETKAFLFAGDSDGDGKIGVDEFQALVRS. Ca(2+)-binding residues include D51, D53, S55, Y57, E59, E62, D90, D92, D94, K96, and E101.

This sequence belongs to the parvalbumin family.

In muscle, parvalbumin is thought to be involved in relaxation after contraction. It binds two calcium ions. This Amphiuma means (Salamander) protein is Parvalbumin beta.